We begin with the raw amino-acid sequence, 141 residues long: Large ribosomal subunit protein uL11 (141 aa).

The protein belongs to the universal ribosomal protein uL11 family. As to quaternary structure, part of the ribosomal stalk of the 50S ribosomal subunit. Interacts with L10 and the large rRNA to form the base of the stalk. L10 forms an elongated spine to which L12 dimers bind in a sequential fashion forming a multimeric L10(L12)X complex. One or more lysine residues are methylated.

Functionally, forms part of the ribosomal stalk which helps the ribosome interact with GTP-bound translation factors. This is Large ribosomal subunit protein uL11 from Ligilactobacillus salivarius (strain UCC118) (Lactobacillus salivarius).